Reading from the N-terminus, the 476-residue chain is Ribulose bisphosphate carboxylase large chain (476 aa).

Positions 1 to 2 are excised as a propeptide; that stretch reads MS. N-acetylproline is present on proline 3. An N6,N6,N6-trimethyllysine modification is found at lysine 14. Substrate contacts are provided by asparagine 123 and threonine 173. Lysine 175 serves as the catalytic Proton acceptor. Lysine 177 lines the substrate pocket. Positions 201, 203, and 204 each coordinate Mg(2+). Lysine 201 bears the N6-carboxylysine mark. The active-site Proton acceptor is the histidine 294. Substrate contacts are provided by arginine 295, histidine 327, and serine 379.

This sequence belongs to the RuBisCO large chain family. Type I subfamily. Heterohexadecamer of 8 large chains and 8 small chains; disulfide-linked. The disulfide link is formed within the large subunit homodimers. Mg(2+) is required as a cofactor. The disulfide bond which can form in the large chain dimeric partners within the hexadecamer appears to be associated with oxidative stress and protein turnover.

The protein resides in the plastid. It localises to the chloroplast. It carries out the reaction 2 (2R)-3-phosphoglycerate + 2 H(+) = D-ribulose 1,5-bisphosphate + CO2 + H2O. The catalysed reaction is D-ribulose 1,5-bisphosphate + O2 = 2-phosphoglycolate + (2R)-3-phosphoglycerate + 2 H(+). Its function is as follows. RuBisCO catalyzes two reactions: the carboxylation of D-ribulose 1,5-bisphosphate, the primary event in carbon dioxide fixation, as well as the oxidative fragmentation of the pentose substrate in the photorespiration process. Both reactions occur simultaneously and in competition at the same active site. This Sorghum bicolor (Sorghum) protein is Ribulose bisphosphate carboxylase large chain.